The primary structure comprises 205 residues: Polyamine-modulated factor 1 (205 aa).

The segment at 1 to 30 (MAEASSANLGSGCEEKRHEGSSSESVPPGT) is disordered. Residues 141–193 (FLQQRDTLRRHVQKQEAENQQLADAVLAGRRQVEELQLQVQAQQQAWQALHRE) adopt a coiled-coil conformation.

Component of the MIS12 complex composed of MIS12, DSN1, NSL1 and PMF1. Interacts with COPS7A. Interacts via its coiled-coil domain with the leucine-zipper domain of NFE2L2. The interaction with NFE2L2 is required for the transcriptional regulation of SSAT. In terms of tissue distribution, highest levels of expression in heart and skeletal muscle, with significant levels expressed in kidney and liver.

The protein localises to the nucleus. It is found in the chromosome. It localises to the centromere. Its subcellular location is the kinetochore. Functionally, part of the MIS12 complex which is required for normal chromosome alignment and segregation and kinetochore formation during mitosis. May act as a cotranscription partner of NFE2L2 involved in regulation of polyamine-induced transcription of SSAT. In Homo sapiens (Human), this protein is Polyamine-modulated factor 1.